The primary structure comprises 86 residues: Small ribosomal subunit protein bS20 (86 aa).

Positions 1–26 (MANIKSAKKRALQSEKSRKHNASRRT) are disordered.

It belongs to the bacterial ribosomal protein bS20 family.

Binds directly to 16S ribosomal RNA. This chain is Small ribosomal subunit protein bS20, found in Psychromonas ingrahamii (strain DSM 17664 / CCUG 51855 / 37).